The following is a 276-amino-acid chain: F420-dependent methylenetetrahydromethanopterin dehydrogenase (276 aa).

The interval Thr-253–Glu-276 is disordered. Positions His-259–Glu-276 are enriched in basic and acidic residues.

Belongs to the MTD family. Found to be tightly associated with methyl-coenzyme M methylreductase.

It carries out the reaction 5,10-methylenetetrahydromethanopterin + oxidized coenzyme F420-(gamma-L-Glu)(n) + 2 H(+) = 5,10-methenyl-5,6,7,8-tetrahydromethanopterin + reduced coenzyme F420-(gamma-L-Glu)(n). It participates in one-carbon metabolism; methanogenesis from CO(2); 5,10-methylene-5,6,7,8-tetrahydromethanopterin from 5,10-methenyl-5,6,7,8-tetrahydromethanopterin (coenzyme F420 route): step 1/1. With respect to regulation, activity requires salt; 100 mM sodium or potassium salts of chloride, phosphate or sulfate are equally effective. Not inactivated by O(2). Inhibited by hydrogen-producing 5,10-methenyltetrahydromethanopterin hydrogenase which has a higher affinity for their shared substrate. Enzyme is O(2)-stable and strictly dependent on coenzyme F420. Catalyzes the reversible reduction of methenyl-H(4)MPT(+) to methylene-H(4)MPT. In Methanothermobacter marburgensis (strain ATCC BAA-927 / DSM 2133 / JCM 14651 / NBRC 100331 / OCM 82 / Marburg) (Methanobacterium thermoautotrophicum), this protein is F420-dependent methylenetetrahydromethanopterin dehydrogenase.